We begin with the raw amino-acid sequence, 65 residues long: Large ribosomal subunit protein uL30 (65 aa).

This sequence belongs to the universal ribosomal protein uL30 family. Part of the 50S ribosomal subunit.

The sequence is that of Large ribosomal subunit protein uL30 from Desulfosudis oleivorans (strain DSM 6200 / JCM 39069 / Hxd3) (Desulfococcus oleovorans).